The chain runs to 264 residues: Glutamate racemase (264 aa).

Substrate-binding positions include 10-11 (DS) and 42-43 (YG). C73 functions as the Proton donor/acceptor in the catalytic mechanism. A substrate-binding site is contributed by 74 to 75 (NT). C183 (proton donor/acceptor) is an active-site residue. A substrate-binding site is contributed by 184–185 (TH).

It belongs to the aspartate/glutamate racemases family.

It catalyses the reaction L-glutamate = D-glutamate. Its pathway is cell wall biogenesis; peptidoglycan biosynthesis. Functionally, provides the (R)-glutamate required for cell wall biosynthesis. The sequence is that of Glutamate racemase from Streptococcus uberis (strain ATCC BAA-854 / 0140J).